Consider the following 278-residue polypeptide: Elongation factor Ts (278 aa).

The tract at residues 82-85 (TDFV) is involved in Mg(2+) ion dislocation from EF-Tu.

It belongs to the EF-Ts family.

It localises to the cytoplasm. Functionally, associates with the EF-Tu.GDP complex and induces the exchange of GDP to GTP. It remains bound to the aminoacyl-tRNA.EF-Tu.GTP complex up to the GTP hydrolysis stage on the ribosome. This is Elongation factor Ts from Streptomyces avermitilis (strain ATCC 31267 / DSM 46492 / JCM 5070 / NBRC 14893 / NCIMB 12804 / NRRL 8165 / MA-4680).